A 358-amino-acid chain; its full sequence is Zinc-type alcohol dehydrogenase-like protein YogA (358 aa).

This sequence belongs to the zinc-containing alcohol dehydrogenase family. Quinone oxidoreductase subfamily.

Its pathway is secondary metabolite biosynthesis. In terms of biological role, zinc-type alcohol dehydrogenase-like protein; part of the gene cluster that mediates the biosynthesis of phomenoic acid, a long chain aliphatic carboxylic acid that does not appear to be essential for pathogenicity but may play a role in allowing to outcompete other fungi in the environmental niche via its antifungal properties. The polyketide synthase produces the long methylated aliphatic carboxylic acid chain of phomenoic acid. The cluster-specific cytochrome P450 monooxygenase may then hydroxylate the methyl group of carbon 31. The putative dehydrogenase YogA, which has no obvious role in phomenoic acid biosynthesis, may further modify phomenoic acid to produce a compound not identified yet. This chain is Zinc-type alcohol dehydrogenase-like protein YogA, found in Leptosphaeria maculans (strain JN3 / isolate v23.1.3 / race Av1-4-5-6-7-8) (Blackleg fungus).